The following is a 507-amino-acid chain: ATP synthase subunit alpha, chloroplastic (507 aa).

170–177 (GDRQTGKA) contacts ATP.

It belongs to the ATPase alpha/beta chains family. In terms of assembly, F-type ATPases have 2 components, CF(1) - the catalytic core - and CF(0) - the membrane proton channel. CF(1) has five subunits: alpha(3), beta(3), gamma(1), delta(1), epsilon(1). CF(0) has four main subunits: a, b, b' and c.

Its subcellular location is the plastid. The protein localises to the chloroplast thylakoid membrane. It carries out the reaction ATP + H2O + 4 H(+)(in) = ADP + phosphate + 5 H(+)(out). Its function is as follows. Produces ATP from ADP in the presence of a proton gradient across the membrane. The alpha chain is a regulatory subunit. This is ATP synthase subunit alpha, chloroplastic from Calycanthus floridus var. glaucus (Eastern sweetshrub).